The primary structure comprises 675 residues: Zeaxanthin epoxidase, chloroplastic (675 aa).

The N-terminal 25 residues, 1–25 (MASTVLYNSLTTSTTVFLRSHLPIS), are a transit peptide targeting the chloroplast. FAD-binding positions include 92 to 120 (RILV…KVFE) and 370 to 383 (KLTW…LLGD). The region spanning 558 to 622 (ICLSRKEDEP…HGTWITDNEG (65 aa)) is the FHA domain.

The cofactor is FAD.

It localises to the plastid. It is found in the chloroplast thylakoid membrane. The catalysed reaction is all-trans-zeaxanthin + 4 reduced [2Fe-2S]-[ferredoxin] + 2 O2 + 4 H(+) = all-trans-violaxanthin + 4 oxidized [2Fe-2S]-[ferredoxin] + 2 H2O. Its pathway is plant hormone biosynthesis; abscisate biosynthesis. Inhibited by diphenyleneiodonium (DPI). Functionally, converts zeaxanthin into antheraxanthin and subsequently violaxanthin. Involved in the epoxidation of zeaxanthin. The polypeptide is Zeaxanthin epoxidase, chloroplastic (Spinacia oleracea (Spinach)).